Consider the following 269-residue polypeptide: Glutamate racemase (269 aa).

Residues 14–15 (DS) and 46–47 (YS) each bind substrate. C78 acts as the Proton donor/acceptor in catalysis. 79–80 (NT) contacts substrate. The Proton donor/acceptor role is filled by C189. Residue 190–191 (TH) coordinates substrate.

Belongs to the aspartate/glutamate racemases family.

The enzyme catalyses L-glutamate = D-glutamate. Its pathway is cell wall biogenesis; peptidoglycan biosynthesis. Functionally, provides the (R)-glutamate required for cell wall biosynthesis. The chain is Glutamate racemase from Haemophilus influenzae (strain PittGG).